The chain runs to 215 residues: Cytidylate kinase (215 aa).

10–18 (GPAAAGKST) serves as a coordination point for ATP.

The protein belongs to the cytidylate kinase family. Type 1 subfamily.

It is found in the cytoplasm. The enzyme catalyses CMP + ATP = CDP + ADP. It carries out the reaction dCMP + ATP = dCDP + ADP. The polypeptide is Cytidylate kinase (Staphylococcus epidermidis (strain ATCC 35984 / DSM 28319 / BCRC 17069 / CCUG 31568 / BM 3577 / RP62A)).